The sequence spans 173 residues: Ribosome maturation factor RimM (173 aa).

The PRC barrel domain occupies 98 to 170 (EGEFYWCDLI…IMTVSPTEGL (73 aa)).

Belongs to the RimM family. As to quaternary structure, binds ribosomal protein uS19.

It is found in the cytoplasm. In terms of biological role, an accessory protein needed during the final step in the assembly of 30S ribosomal subunit, possibly for assembly of the head region. Essential for efficient processing of 16S rRNA. May be needed both before and after RbfA during the maturation of 16S rRNA. It has affinity for free ribosomal 30S subunits but not for 70S ribosomes. In Geobacter metallireducens (strain ATCC 53774 / DSM 7210 / GS-15), this protein is Ribosome maturation factor RimM.